A 217-amino-acid chain; its full sequence is Cytochrome b5 domain-containing protein 1 (217 aa).

The region spanning 6 to 72 (PRFYTPREVS…NPKTGDVKTH (67 aa)) is the Cytochrome b5 heme-binding domain. Heme contacts are provided by histidine 41 and histidine 72.

Belongs to the cytochrome b5 family.

The protein resides in the cytoplasm. Its subcellular location is the cytoskeleton. The protein localises to the cilium axoneme. Its function is as follows. Radial spoke stalk protein that binds heme under oxidizing conditions. Required for the coordinated beating of multiple cilia maybe by functioning in a redox signaling pathway. The sequence is that of Cytochrome b5 domain-containing protein 1 (cyb5d1) from Xenopus tropicalis (Western clawed frog).